Consider the following 100-residue polypeptide: NADH-ubiquinone oxidoreductase chain 4L (100 aa).

3 helical membrane passes run 3–23, 28–48, and 62–82; these read LVKY…GIFL, ILIM…NFLV, and ALFV…ILVI.

The protein belongs to the complex I subunit 4L family. Complex I is composed of about 45 different subunits.

The protein resides in the mitochondrion membrane. It catalyses the reaction a ubiquinone + NADH + 5 H(+)(in) = a ubiquinol + NAD(+) + 4 H(+)(out). Its function is as follows. Core subunit of the mitochondrial membrane respiratory chain NADH dehydrogenase (Complex I) that is believed to belong to the minimal assembly required for catalysis. Complex I functions in the transfer of electrons from NADH to the respiratory chain. The immediate electron acceptor for the enzyme is believed to be ubiquinone. The sequence is that of NADH-ubiquinone oxidoreductase chain 4L (ND4L) from Marchantia polymorpha (Common liverwort).